A 527-amino-acid chain; its full sequence is DNA polymerase epsilon subunit 2 (527 aa).

The protein belongs to the DNA polymerase epsilon subunit B family. Component of the DNA polymerase epsilon complex consisting of four subunits: the catalytic subunit POLE and the accessory subunits POLE2, POLE3 and POLE4.

It localises to the nucleus. Functionally, accessory component of the DNA polymerase epsilon complex. Participates in DNA repair and in chromosomal DNA replication. The polypeptide is DNA polymerase epsilon subunit 2 (Pole2) (Mus musculus (Mouse)).